A 199-amino-acid polypeptide reads, in one-letter code: Small ribosomal subunit protein uS14m (199 aa).

A disordered region spans residues 28–67; the sequence is LSTPAPEPAKPSSEETTESTEPATSVEDAGEPMKEKRITQ.

The protein belongs to the universal ribosomal protein uS14 family. In terms of assembly, component of the mitochondrial ribosome small subunit (28S) which comprises a 12S rRNA and about 30 distinct proteins. Interacts with LIAT1.

The protein resides in the mitochondrion. The chain is Small ribosomal subunit protein uS14m (mrps-14) from Caenorhabditis elegans.